We begin with the raw amino-acid sequence, 186 residues long: Peptidyl-tRNA hydrolase (186 aa).

Tyrosine 14 is a binding site for tRNA. Catalysis depends on histidine 19, which acts as the Proton acceptor. Residues tyrosine 64, asparagine 66, and asparagine 112 each coordinate tRNA.

This sequence belongs to the PTH family. As to quaternary structure, monomer.

The protein resides in the cytoplasm. It carries out the reaction an N-acyl-L-alpha-aminoacyl-tRNA + H2O = an N-acyl-L-amino acid + a tRNA + H(+). Its function is as follows. Hydrolyzes ribosome-free peptidyl-tRNAs (with 1 or more amino acids incorporated), which drop off the ribosome during protein synthesis, or as a result of ribosome stalling. Functionally, catalyzes the release of premature peptidyl moieties from peptidyl-tRNA molecules trapped in stalled 50S ribosomal subunits, and thus maintains levels of free tRNAs and 50S ribosomes. The chain is Peptidyl-tRNA hydrolase from Bacillus cytotoxicus (strain DSM 22905 / CIP 110041 / 391-98 / NVH 391-98).